Here is a 133-residue protein sequence, read N- to C-terminus: Small ribosomal subunit protein eS24z (133 aa).

Positions 104-133 are disordered; the sequence is KSRKQIKERKNRAKKIRGVKKTKAGDAKKK. Over residues 109-125 the composition is skewed to basic residues; that stretch reads IKERKNRAKKIRGVKKT.

Belongs to the eukaryotic ribosomal protein eS24 family.

The protein is Small ribosomal subunit protein eS24z (RPS24A) of Arabidopsis thaliana (Mouse-ear cress).